An 83-amino-acid polypeptide reads, in one-letter code: MVVIRLARGGSKKRPFFNIVATDSRSRRDGRFIERVGFYNPLAAEGEEGLRLAQDRLAYWQGVGAQLSPTVARLVKQGAKAAA.

Belongs to the bacterial ribosomal protein bS16 family.

This Cupriavidus taiwanensis (strain DSM 17343 / BCRC 17206 / CCUG 44338 / CIP 107171 / LMG 19424 / R1) (Ralstonia taiwanensis (strain LMG 19424)) protein is Small ribosomal subunit protein bS16.